We begin with the raw amino-acid sequence, 194 residues long: dTTP/UTP pyrophosphatase (194 aa).

The active-site Proton acceptor is Asp69.

This sequence belongs to the Maf family. YhdE subfamily. It depends on a divalent metal cation as a cofactor.

The protein localises to the cytoplasm. The enzyme catalyses dTTP + H2O = dTMP + diphosphate + H(+). It carries out the reaction UTP + H2O = UMP + diphosphate + H(+). Functionally, nucleoside triphosphate pyrophosphatase that hydrolyzes dTTP and UTP. May have a dual role in cell division arrest and in preventing the incorporation of modified nucleotides into cellular nucleic acids. The polypeptide is dTTP/UTP pyrophosphatase (Moorella thermoacetica (strain ATCC 39073 / JCM 9320)).